Here is a 290-residue protein sequence, read N- to C-terminus: uncharacterized protein (290 aa).

Disordered regions lie at residues 89 to 157 (CSEN…EELS), 172 to 217 (MANT…MESS), and 261 to 290 (TANTPPTVVHVSKPSSETSVSIPPSSAVKK). Composition is skewed to basic and acidic residues over residues 106–124 (DFSKTTVDETIKEKSEKQP) and 142–152 (KTEKLVSKEPS). 2 stretches are compositionally biased toward polar residues: residues 172 to 183 (MANTSSSANRTG) and 193 to 202 (KPTTAVQAST). Low complexity-rich tracts occupy residues 207 to 217 (MSSAESAMESS) and 274 to 290 (PSSETSVSIPPSSAVKK).

This is an uncharacterized protein from Caenorhabditis elegans.